We begin with the raw amino-acid sequence, 255 residues long: Hemin import ATP-binding protein HmuV (255 aa).

An ABC transporter domain is found at L2–E238. Position 34–41 (G34–S41) interacts with ATP.

This sequence belongs to the ABC transporter superfamily. Heme (hemin) importer (TC 3.A.1.14.5) family. As to quaternary structure, the complex is composed of two ATP-binding proteins (HmuV), two transmembrane proteins (HmuU) and a solute-binding protein (HmuT).

The protein resides in the cell inner membrane. Functionally, part of the ABC transporter complex HmuTUV involved in hemin import. Responsible for energy coupling to the transport system. In Pseudomonas aeruginosa (strain ATCC 15692 / DSM 22644 / CIP 104116 / JCM 14847 / LMG 12228 / 1C / PRS 101 / PAO1), this protein is Hemin import ATP-binding protein HmuV.